Reading from the N-terminus, the 130-residue chain is Small ribosomal subunit protein uS9 (130 aa).

This sequence belongs to the universal ribosomal protein uS9 family.

The chain is Small ribosomal subunit protein uS9 from Bordetella bronchiseptica (strain ATCC BAA-588 / NCTC 13252 / RB50) (Alcaligenes bronchisepticus).